We begin with the raw amino-acid sequence, 264 residues long: Hemin import ATP-binding protein HmuV (264 aa).

In terms of domain architecture, ABC transporter spans isoleucine 2 to arginine 241. Glycine 34–threonine 41 is a binding site for ATP.

The protein belongs to the ABC transporter superfamily. Heme (hemin) importer (TC 3.A.1.14.5) family. As to quaternary structure, the complex is composed of two ATP-binding proteins (HmuV), two transmembrane proteins (HmuU) and a solute-binding protein (HmuT).

The protein localises to the cell inner membrane. In terms of biological role, part of the ABC transporter complex HmuTUV involved in hemin import. Responsible for energy coupling to the transport system. The sequence is that of Hemin import ATP-binding protein HmuV from Rhizobium leguminosarum.